Here is a 400-residue protein sequence, read N- to C-terminus: Cytoplasmic polyadenylated homeobox-like protein 2 (400 aa).

The interval 1 to 29 (MSSQAFPAEEDHHNEERQTKKKRKTKHRH) is disordered. A compositionally biased stretch (basic and acidic residues) spans 9–18 (EEDHHNEERQ). Positions 19-29 (TKKKRKTKHRH) are enriched in basic residues. Residues 24–83 (KTKHRHKFSEELLQELKEIFGENGYPDFTTRKTLANKFDCPVNVINNWFQNNRARLPPEE) constitute a DNA-binding region (homeobox).

It is found in the nucleus. This Homo sapiens (Human) protein is Cytoplasmic polyadenylated homeobox-like protein 2.